Here is a 348-residue protein sequence, read N- to C-terminus: 3'-dehydrocarminate deglycosidase alpha subunit (348 aa).

E145 lines the Mg(2+) pocket. The active-site Proton acceptor is H147. 3 residues coordinate Mg(2+): D177, H275, and E311.

It belongs to the C-glycoside deglycosidase alpha subunit family. Heterodimer composed of an alpha subunit (CarB) and a beta subunit (CarC). It depends on Mg(2+) as a cofactor.

The enzyme catalyses 3'-dehydrocarminate + H(+) = kermesate + 1,5-anhydro-D-erythro-hex-1-en-3-ulose. With respect to regulation, activity is strongly reduced in the presence of chelating agents. Functionally, carbon-carbon bond-cleaving enzyme which participates in a carminate degradation pathway. Cleaves the C-C bond in 3'-dehydrocarminate to form kermesate. Also shows weak activity with other C-glycosides, such as 3''-dehydropuerarin (3''-oxo-puerarin), 3''-dehydroisoorientin (3''-oxo-homoorientin) and 3'-dehydromangiferin (3'-oxo-mangiferin). The polypeptide is 3'-dehydrocarminate deglycosidase alpha subunit (Microbacterium sp).